The following is a 475-amino-acid chain: Ribulose bisphosphate carboxylase large chain (475 aa).

The substrate site is built by Asn-123 and Thr-173. Catalysis depends on Lys-175, which acts as the Proton acceptor. Position 177 (Lys-177) interacts with substrate. Residues Lys-201, Asp-203, and Glu-204 each coordinate Mg(2+). Lys-201 is subject to N6-carboxylysine. His-294 functions as the Proton acceptor in the catalytic mechanism. Positions 295, 327, and 379 each coordinate substrate.

The protein belongs to the RuBisCO large chain family. Type I subfamily. Heterohexadecamer of 8 large chains and 8 small chains; disulfide-linked. The disulfide link is formed within the large subunit homodimers. Interacts with assembly factor Raf1 which helps form the holoenzyme, most interaction (and folding) occurs in the cytoplasm. Requires Mg(2+) as cofactor. In terms of processing, the disulfide bond which can form in the large chain dimeric partners within the hexadecamer appears to be associated with oxidative stress and protein turnover.

It is found in the carboxysome. The protein resides in the cytoplasm. The enzyme catalyses 2 (2R)-3-phosphoglycerate + 2 H(+) = D-ribulose 1,5-bisphosphate + CO2 + H2O. It carries out the reaction D-ribulose 1,5-bisphosphate + O2 = 2-phosphoglycolate + (2R)-3-phosphoglycerate + 2 H(+). Its function is as follows. RuBisCO catalyzes two reactions: the carboxylation of D-ribulose 1,5-bisphosphate, the primary event in carbon dioxide fixation, as well as the oxidative fragmentation of the pentose substrate in the photorespiration process. Both reactions occur simultaneously and in competition at the same active site. The sequence is that of Ribulose bisphosphate carboxylase large chain from Thermosynechococcus vestitus (strain NIES-2133 / IAM M-273 / BP-1).